The primary structure comprises 257 residues: UPF0246 protein CPS_4102 (257 aa).

This sequence belongs to the UPF0246 family.

This is UPF0246 protein CPS_4102 from Colwellia psychrerythraea (strain 34H / ATCC BAA-681) (Vibrio psychroerythus).